A 299-amino-acid polypeptide reads, in one-letter code: tRNA dimethylallyltransferase (299 aa).

11 to 18 (GPTAVGKT) is a binding site for ATP. 13 to 18 (TAVGKT) provides a ligand contact to substrate. Positions 36–39 (DSQQ) are interaction with substrate tRNA.

This sequence belongs to the IPP transferase family. In terms of assembly, monomer. Requires Mg(2+) as cofactor.

The enzyme catalyses adenosine(37) in tRNA + dimethylallyl diphosphate = N(6)-dimethylallyladenosine(37) in tRNA + diphosphate. Catalyzes the transfer of a dimethylallyl group onto the adenine at position 37 in tRNAs that read codons beginning with uridine, leading to the formation of N6-(dimethylallyl)adenosine (i(6)A). The polypeptide is tRNA dimethylallyltransferase (Streptococcus pyogenes serotype M12 (strain MGAS2096)).